Here is a 338-residue protein sequence, read N- to C-terminus: TPR repeat-containing protein MJ0941 (338 aa).

TPR repeat units lie at residues 27-62 (LEAVANVLRAYRELFEGNLIKALYYVDKALELEPDF), 63-96 (YLALFLKGLALSAKGEIKEAITTFEELLSYESKN), 97-130 (PITWVFVGQLYGMSGNCDEALKCYNKALGIENRF), 131-164 (LSAFLLKTICLEFLGEYDELLKCYNEVLTYTPNF), 165-198 (VPMWVKKAEILRKLGRYEDALLCLNRALELKPHD), 199-232 (KNALYLKGVLLKRMGKFREALECFKKLIDELNVK), 268-301 (VALWYFKGELYERLGKLDEALKCYEKVIELQPHY), and 302-335 (IKALLSKARIYERQGNIEAAIEYYNKAVENIHKD).

The polypeptide is TPR repeat-containing protein MJ0941 (Methanocaldococcus jannaschii (strain ATCC 43067 / DSM 2661 / JAL-1 / JCM 10045 / NBRC 100440) (Methanococcus jannaschii)).